The sequence spans 367 residues: Dimethyladenosine transferase 1, mitochondrial (367 aa).

The transit peptide at Met-1–Phe-16 directs the protein to the mitochondrion. S-adenosyl-L-methionine contacts are provided by residues Gln-30–Leu-33, Asn-31, Leu-33, Gly-58, Glu-80, Asp-106, and Asn-141.

It belongs to the class I-like SAM-binding methyltransferase superfamily. rRNA adenine N(6)-methyltransferase family. KsgA subfamily.

The protein localises to the mitochondrion. Functionally, probable S-adenosyl-L-methionine-dependent methyltransferase which specifically dimethylates mitochondrial 12S rRNA at the conserved stem loop. Also required for basal transcription of mitochondrial DNA. Stimulates transcription independently of the methyltransferase activity. The protein is Dimethyladenosine transferase 1, mitochondrial (tfbm-1) of Caenorhabditis elegans.